A 350-amino-acid chain; its full sequence is Very-long-chain 3-oxoacyl-CoA reductase (350 aa).

A helical transmembrane segment spans residues 20–40 (ALLFSLLFGVFKLTTFTLRFA). Val-66, Asp-120, Asn-147, Tyr-221, Lys-225, Val-254, and Ser-256 together coordinate NADP(+). Catalysis depends on Tyr-221, which acts as the Proton donor. The active-site Lowers pKa of active site Tyr is Lys-225.

It belongs to the short-chain dehydrogenases/reductases (SDR) family.

The protein localises to the endoplasmic reticulum membrane. It carries out the reaction a very-long-chain (3R)-3-hydroxyacyl-CoA + NADP(+) = a very-long-chain 3-oxoacyl-CoA + NADPH + H(+). The protein operates within lipid metabolism; fatty acid biosynthesis. In terms of biological role, component of the microsomal membrane bound fatty acid elongation system, which produces the 26-carbon very long-chain fatty acids (VLCFA) from palmitate. Catalyzes the reduction of the 3-ketoacyl-CoA intermediate that is formed in each cycle of fatty acid elongation. VLCFAs serve as precursors for ceramide and sphingolipids. The chain is Very-long-chain 3-oxoacyl-CoA reductase from Lodderomyces elongisporus (strain ATCC 11503 / CBS 2605 / JCM 1781 / NBRC 1676 / NRRL YB-4239) (Yeast).